The chain runs to 304 residues: Ribonuclease Z (304 aa).

Zn(2+)-binding residues include His61, His63, Asp65, His66, His138, Asp206, and His265. The Proton acceptor role is filled by Asp65.

This sequence belongs to the RNase Z family. Homodimer. Zn(2+) is required as a cofactor.

It carries out the reaction Endonucleolytic cleavage of RNA, removing extra 3' nucleotides from tRNA precursor, generating 3' termini of tRNAs. A 3'-hydroxy group is left at the tRNA terminus and a 5'-phosphoryl group is left at the trailer molecule.. Its function is as follows. Zinc phosphodiesterase, which displays some tRNA 3'-processing endonuclease activity. Probably involved in tRNA maturation, by removing a 3'-trailer from precursor tRNA. The protein is Ribonuclease Z of Lachnospira eligens (strain ATCC 27750 / DSM 3376 / VPI C15-48 / C15-B4) (Eubacterium eligens).